The sequence spans 203 residues: Holliday junction branch migration complex subunit RuvA (203 aa).

The segment at 1–62 (MYEYFLGQVT…ENGMSLFGFF (62 aa)) is domain I. Residues 63-141 (DADEKALFEK…DLNVDVTGQT (79 aa)) form a domain II region. Residues 142-148 (ALDVDAP) form a flexible linker region. The interval 149–203 (AVDGALADALAALEALGYSKADVKKVTKKLETFSQTQGADTNTLLSEGLRLLMKK) is domain III.

It belongs to the RuvA family. In terms of assembly, homotetramer. Forms an RuvA(8)-RuvB(12)-Holliday junction (HJ) complex. HJ DNA is sandwiched between 2 RuvA tetramers; dsDNA enters through RuvA and exits via RuvB. An RuvB hexamer assembles on each DNA strand where it exits the tetramer. Each RuvB hexamer is contacted by two RuvA subunits (via domain III) on 2 adjacent RuvB subunits; this complex drives branch migration. In the full resolvosome a probable DNA-RuvA(4)-RuvB(12)-RuvC(2) complex forms which resolves the HJ.

The protein resides in the cytoplasm. Functionally, the RuvA-RuvB-RuvC complex processes Holliday junction (HJ) DNA during genetic recombination and DNA repair, while the RuvA-RuvB complex plays an important role in the rescue of blocked DNA replication forks via replication fork reversal (RFR). RuvA specifically binds to HJ cruciform DNA, conferring on it an open structure. The RuvB hexamer acts as an ATP-dependent pump, pulling dsDNA into and through the RuvAB complex. HJ branch migration allows RuvC to scan DNA until it finds its consensus sequence, where it cleaves and resolves the cruciform DNA. This chain is Holliday junction branch migration complex subunit RuvA, found in Lactiplantibacillus plantarum (strain ATCC BAA-793 / NCIMB 8826 / WCFS1) (Lactobacillus plantarum).